Consider the following 280-residue polypeptide: Virginiamycin B lyase (280 aa).

Histidine 215 serves as a coordination point for substrate. Residue glutamate 254 participates in Mg(2+) binding. The Proton acceptor role is filled by histidine 256. Glutamate 271 lines the Mg(2+) pocket.

This sequence belongs to the Vgb family. In terms of assembly, monomer. The cofactor is Mg(2+).

Its function is as follows. Inactivates the type B streptogramin antibiotics by linearizing the lactone ring at the ester linkage, generating a free phenylglycine carboxylate and converting the threonyl moiety into 2-amino-butenoic acid. The protein is Virginiamycin B lyase of Mycobacterium sp. (strain JLS).